Consider the following 355-residue polypeptide: Magnesium-chelatase subunit ChlI (355 aa).

46–53 (GDRGTGKS) contacts ATP. Residues Cys-281 and Cys-323 are joined by a disulfide bond.

It belongs to the Mg-chelatase subunits D/I family. The magnesium chelatase complex is a heterotrimer consisting of subunits CHLI, CHLD and CHLH.

Its subcellular location is the plastid. The protein resides in the chloroplast. It catalyses the reaction protoporphyrin IX + Mg(2+) + ATP + H2O = Mg-protoporphyrin IX + ADP + phosphate + 3 H(+). Its pathway is porphyrin-containing compound metabolism; chlorophyll biosynthesis. With respect to regulation, redox regulation; active in reducing conditions, inactive in oxidizing conditions. Thioredoxins f and m mediate the reversible reductive activation of oxidized CHLI. In terms of biological role, involved in chlorophyll biosynthesis. Catalyzes the insertion of magnesium ion into protoporphyrin IX to yield Mg-protoporphyrin IX. The magnesium-chelatase is a complex of three subunits, CHLI, CHLD and CHLH. The reaction takes place in two steps, with an ATP-dependent activation followed by an ATP-dependent chelation step. In Nephroselmis olivacea (Green alga), this protein is Magnesium-chelatase subunit ChlI (chlI).